The sequence spans 947 residues: Protein NETWORKED 2A (947 aa).

The region spanning 10–90 (YSWWWASHIR…ERYDHLSREL (81 aa)) is the NAB domain. A disordered region spans residues 105-131 (VQFPLEDDSDENEDYDGRPRKPPKHLH). Over residues 109–118 (LEDDSDENED) the composition is skewed to acidic residues. 2 coiled-coil regions span residues 348 to 454 (KLAE…IQDV) and 568 to 619 (VLRD…QKLD). Basic and acidic residues-rich tracts occupy residues 618–627 (LDTTGKDSPH) and 635–644 (LEHEQGHHET). Disordered regions lie at residues 618-675 (LDTT…RTKS), 743-763 (RIES…AVAS), and 911-947 (KNRQ…KLPE). Positions 645–660 (VSISPTSNFSVATTPH) are enriched in polar residues. Residues 662–675 (QVGDVKRTPGRTKS) show a composition bias toward basic and acidic residues. The stretch at 722-809 (VHQIQKYQTT…LANIQEEIAR (88 aa)) forms a coiled coil. 2 stretches are compositionally biased toward polar residues: residues 749-761 (QQES…NTAV) and 915-927 (QKQS…SCVS).

It belongs to the NET family. As to expression, expressed specifically in pollen.

It localises to the cell membrane. In terms of biological role, plant-specific actin binding protein. Associates with F-actin at the plasma membrane in growing pollen tubes. May be part of a membrane-cytoskeletal adapter complex. This chain is Protein NETWORKED 2A, found in Arabidopsis thaliana (Mouse-ear cress).